Consider the following 564-residue polypeptide: 5-aminolevulinate synthase, mitochondrial (564 aa).

The N-terminal 57 residues, 1 to 57 (MESITKVSMSVCPFVRSTSTQALRQLSQTSGALANQARQCPIAGNAIRAKEISIRSY), are a transit peptide targeting the mitochondrion. Positions 113, 226, and 245 each coordinate substrate. Pyridoxal 5'-phosphate-binding residues include S278, H306, and T350. The active site involves K353. K353 bears the N6-(pyridoxal phosphate)lysine mark. Pyridoxal 5'-phosphate-binding residues include T382 and T383. T468 is a binding site for substrate.

Belongs to the class-II pyridoxal-phosphate-dependent aminotransferase family. Homodimer. Pyridoxal 5'-phosphate serves as cofactor.

The protein resides in the mitochondrion matrix. It carries out the reaction succinyl-CoA + glycine + H(+) = 5-aminolevulinate + CO2 + CoA. It participates in porphyrin-containing compound metabolism; protoporphyrin-IX biosynthesis; 5-aminolevulinate from glycine: step 1/1. Functionally, catalyzes the synthesis of 5-aminolevulinate (ALA) from succinyl-CoA and glycine, the first and rate-limiting step in heme biosynthesis. This Candida albicans (strain SC5314 / ATCC MYA-2876) (Yeast) protein is 5-aminolevulinate synthase, mitochondrial (HEM1).